The following is a 65-amino-acid chain: Alpha-toxin Bot11 (65 aa).

The 63-residue stretch at 2-64 (KDGYIVDDRN…VRTVQAGRCR (63 aa)) folds into the LCN-type CS-alpha/beta domain. 4 disulfides stabilise this stretch: cysteine 12–cysteine 63, cysteine 16–cysteine 36, cysteine 22–cysteine 46, and cysteine 26–cysteine 48.

It belongs to the long (4 C-C) scorpion toxin superfamily. Sodium channel inhibitor family. Alpha subfamily. As to expression, expressed by the venom gland.

It is found in the secreted. In terms of biological role, alpha toxins bind voltage-independently at site-3 of sodium channels (Nav) and inhibit the inactivation of the activated channels, thereby blocking neuronal transmission. This chain is Alpha-toxin Bot11, found in Buthus occitanus tunetanus (Common European scorpion).